A 516-amino-acid polypeptide reads, in one-letter code: Glutamyl-tRNA(Gln) amidotransferase subunit B, mitochondrial (516 aa).

It belongs to the GatB/GatE family. GatB subfamily. Subunit of the heterotrimeric GatCAB amidotransferase (AdT) complex, composed of A, B and C subunits.

The protein localises to the mitochondrion. The catalysed reaction is L-glutamyl-tRNA(Gln) + L-glutamine + ATP + H2O = L-glutaminyl-tRNA(Gln) + L-glutamate + ADP + phosphate + H(+). Functionally, allows the formation of correctly charged Gln-tRNA(Gln) through the transamidation of misacylated Glu-tRNA(Gln) in the mitochondria. The reaction takes place in the presence of glutamine and ATP through an activated gamma-phospho-Glu-tRNA(Gln). The polypeptide is Glutamyl-tRNA(Gln) amidotransferase subunit B, mitochondrial (Drosophila melanogaster (Fruit fly)).